The chain runs to 384 residues: Deoxyguanosinetriphosphate triphosphohydrolase-like protein (384 aa).

Positions 62 to 198 constitute an HD domain; sequence RLTHSLEVST…AALADDISYI (137 aa).

It belongs to the dGTPase family. Type 2 subfamily.

The protein is Deoxyguanosinetriphosphate triphosphohydrolase-like protein of Rickettsia peacockii (strain Rustic).